Reading from the N-terminus, the 245-residue chain is Ribosomal RNA small subunit methyltransferase G (245 aa).

Residues G90, L95, 140–141 (AE), and R158 each bind S-adenosyl-L-methionine.

This sequence belongs to the methyltransferase superfamily. RNA methyltransferase RsmG family.

It localises to the cytoplasm. Specifically methylates the N7 position of guanine in position 518 of 16S rRNA. The sequence is that of Ribosomal RNA small subunit methyltransferase G from Mycobacterium leprae (strain TN).